A 362-amino-acid chain; its full sequence is Tyrosyl-DNA phosphodiesterase 2 (362 aa).

The residue at position 1 (M1) is an N-acetylmethionine. Positions 1 to 20 (MELGSCLEGGREAAEEEGEP) are disordered. Glycyl lysine isopeptide (Lys-Gly) (interchain with G-Cter in SUMO2) cross-links involve residues K23 and K82. The disordered stretch occupies residues 87–109 (LTNEETTDSTTSKISPSEDTQQE). 2 positions are modified to phosphothreonine; by ACVR1B: T88 and T92. The span at 94–109 (DSTTSKISPSEDTQQE) shows a compositional bias: polar residues. Phosphoserine is present on S95. Residues 120–124 (NIDGL) are interaction with 5' end of substrate DNA. Positions 122 and 152 each coordinate Mg(2+). The interval 226 to 231 (HLESTR) is interaction with 5' end of substrate DNA. D262 serves as the catalytic Proton donor/acceptor. Positions 264 to 266 (NLR) are interaction with 5' end of substrate DNA.

The protein belongs to the CCR4/nocturin family. As to quaternary structure, interacts with TRAF2, TRAF3, TRAF5, TRAF6, TNFRSF8/CD30, TNFRSF5/CD40, TNFRSF1B/TNF-R75, ETS1, ETS2, FLI1, SMAD3 and ACVR1B/ALK4. In terms of assembly, (Microbial infection) Interacts with Hantaan hantavirus nucleoprotein. (Microbial infection) Interacts with Seoul hantavirus nucleoprotein. Requires Mg(2+) as cofactor. The cofactor is Mn(2+). Post-translationally, ubiquitinated by TRAF6. In terms of tissue distribution, widely expressed. Highly expressed in various brain regions, including the frontal and occipital lobes, the hippocampus, the striatum and the cerebellum.

It is found in the nucleus. The protein localises to the PML body. Its subcellular location is the nucleolus. The protein resides in the cytoplasm. In terms of biological role, DNA repair enzyme that can remove a variety of covalent adducts from DNA through hydrolysis of a 5'-phosphodiester bond, giving rise to DNA with a free 5' phosphate. Catalyzes the hydrolysis of dead-end complexes between DNA and the topoisomerase 2 (TOP2) active site tyrosine residue. The 5'-tyrosyl DNA phosphodiesterase activity can enable the repair of TOP2-induced DNA double-strand breaks/DSBs without the need for nuclease activity, creating a 'clean' DSB with 5'-phosphate termini that are ready for ligation. Thereby, protects the transcription of many genes involved in neurological development and maintenance from the abortive activity of TOP2. Hydrolyzes 5'-phosphoglycolates on protruding 5' ends on DSBs due to DNA damage by radiation and free radicals. Has preference for single-stranded DNA or duplex DNA with a 4 base pair overhang as substrate. Acts as a regulator of ribosome biogenesis following stress. Also has 3'-tyrosyl DNA phosphodiesterase activity, but less efficiently and much slower than TDP1. Constitutes the major if not only 5'-tyrosyl-DNA phosphodiesterase in cells. Also acts as an adapter by participating in the specific activation of MAP3K7/TAK1 in response to TGF-beta: associates with components of the TGF-beta receptor-TRAF6-TAK1 signaling module and promotes their ubiquitination dependent complex formation. Involved in non-canonical TGF-beta induced signaling routes. May also act as a negative regulator of ETS1 and may inhibit NF-kappa-B activation. Its function is as follows. (Microbial infection) Used by picornaviruses to remove the small polypeptide, VPg (virus Protein genome-linked, the primer for viral RNA synthesis), from the genomic RNA of the virus. Acts as a 5'-tyrosyl RNA phosphodiesterase and cleaves the covalent VPg-Tyr-RNA bond. This cleavage would play a role in viral replication and occur in viral replication vesicles, but would not act on viral mRNA. This is Tyrosyl-DNA phosphodiesterase 2 from Homo sapiens (Human).